Consider the following 317-residue polypeptide: COP9 signalosome complex subunit 6a (317 aa).

One can recognise an MPN domain in the interval 30–164 (TQLNPPASIC…VTIYESELHV (135 aa)).

It belongs to the peptidase M67A family. CSN6 subfamily. As to quaternary structure, component of the CSN complex, probably composed of CSN1, CSN2, CSN3, CSN4, CSN5 (CSN5A or CSN5B), CSN6 (CSN6A or CSN6B), CSN7 and CSN8. Interacts with itself. In the complex, it probably interacts directly with CSN4 and CSN5A or CSN5B. Interacts with CSN7 (via C-terminal tail). Binds to the translation initiation factors TIF3E1.

It is found in the cytoplasm. Its subcellular location is the nucleus. Its function is as follows. Component of the COP9 signalosome complex (CSN), a complex involved in various cellular and developmental processes such as photomorphogenesis and auxin and jasmonate responses. The CSN complex is an essential regulator of the ubiquitin (Ubl) conjugation pathway by mediating the deneddylation of the cullin subunits of SCF-type E3 ligase complexes, leading to decrease the Ubl ligase activity of SCF. It is involved in repression of photomorphogenesis in darkness by regulating the activity of COP1-containing Ubl ligase complexes. The complex is also required for degradation of PSIAA6 by regulating the activity of the Ubl ligase SCF-TIR complex. Essential for the structural integrity of the CSN holocomplex. The chain is COP9 signalosome complex subunit 6a from Arabidopsis thaliana (Mouse-ear cress).